Reading from the N-terminus, the 247-residue chain is MSHRDTLFSAPIARLGDWTFDERVAEVFPDMIQRSVPGYSNIISMIGMLAERFVQPGTQVYDLGCSLGAATLSVRRNIHHDNCKIIAIDNSPAMIERCRRHIDAYKAPTPVDVIEGDIRNIAIENASMVVLNFTLQFLEPSERQALLDKIYQGLNPGGALVLSEKFSFEDAKVGELLFNMHHDFKRANGYSELEISQKRSMLENVMLTDSVETHKARLHQAGFEHSELWFQCFNFGSLVALKAEDAA.

S-adenosyl-L-methionine is bound by residues tyrosine 39, 64 to 66, 89 to 90, 117 to 118, asparagine 132, and arginine 199; these read GCS, DN, and DI.

Belongs to the class I-like SAM-binding methyltransferase superfamily. Cx-SAM synthase family. In terms of assembly, homodimer.

The catalysed reaction is prephenate + S-adenosyl-L-methionine = carboxy-S-adenosyl-L-methionine + 3-phenylpyruvate + H2O. Catalyzes the conversion of S-adenosyl-L-methionine (SAM) to carboxy-S-adenosyl-L-methionine (Cx-SAM). This is Carboxy-S-adenosyl-L-methionine synthase from Escherichia coli O17:K52:H18 (strain UMN026 / ExPEC).